The sequence spans 184 residues: uncharacterized protein (184 aa).

Residues 32–52 (PCPRSRTQGQSRRSETHTISR) are disordered.

The protein localises to the mitochondrion. This is an uncharacterized protein from Arabidopsis thaliana (Mouse-ear cress).